The following is a 514-amino-acid chain: 2,3-bisphosphoglycerate-independent phosphoglycerate mutase (514 aa).

Residues aspartate 14 and serine 64 each coordinate Mn(2+). Serine 64 acts as the Phosphoserine intermediate in catalysis. Residues histidine 125, 155–156, arginine 187, arginine 193, 263–266, and lysine 336 each bind substrate; these read RD and RADR. Mn(2+) is bound by residues aspartate 403, histidine 407, aspartate 444, histidine 445, and histidine 463.

Belongs to the BPG-independent phosphoglycerate mutase family. In terms of assembly, monomer. Mn(2+) serves as cofactor.

It catalyses the reaction (2R)-2-phosphoglycerate = (2R)-3-phosphoglycerate. It participates in carbohydrate degradation; glycolysis; pyruvate from D-glyceraldehyde 3-phosphate: step 3/5. Its function is as follows. Catalyzes the interconversion of 2-phosphoglycerate and 3-phosphoglycerate. The chain is 2,3-bisphosphoglycerate-independent phosphoglycerate mutase from Shewanella halifaxensis (strain HAW-EB4).